The primary structure comprises 89 residues: Large ribosomal subunit protein bL27 (89 aa).

A disordered region spans residues 1–20 (MAHKKAGGSSRNGRDSIGRR).

This sequence belongs to the bacterial ribosomal protein bL27 family.

The protein is Large ribosomal subunit protein bL27 of Ruegeria pomeroyi (strain ATCC 700808 / DSM 15171 / DSS-3) (Silicibacter pomeroyi).